The primary structure comprises 93 residues: Large ribosomal subunit protein uL23 (93 aa).

Belongs to the universal ribosomal protein uL23 family. Part of the 50S ribosomal subunit. Contacts protein L29, and trigger factor when it is bound to the ribosome.

Its function is as follows. One of the early assembly proteins it binds 23S rRNA. One of the proteins that surrounds the polypeptide exit tunnel on the outside of the ribosome. Forms the main docking site for trigger factor binding to the ribosome. This chain is Large ribosomal subunit protein uL23, found in Opitutus terrae (strain DSM 11246 / JCM 15787 / PB90-1).